The sequence spans 141 residues: Nucleoside diphosphate kinase (141 aa).

Positions 9, 57, 85, 91, 102, and 112 each coordinate ATP. Histidine 115 acts as the Pros-phosphohistidine intermediate in catalysis.

This sequence belongs to the NDK family. Homotetramer. The cofactor is Mg(2+).

It localises to the cytoplasm. The enzyme catalyses a 2'-deoxyribonucleoside 5'-diphosphate + ATP = a 2'-deoxyribonucleoside 5'-triphosphate + ADP. It catalyses the reaction a ribonucleoside 5'-diphosphate + ATP = a ribonucleoside 5'-triphosphate + ADP. Functionally, major role in the synthesis of nucleoside triphosphates other than ATP. The ATP gamma phosphate is transferred to the NDP beta phosphate via a ping-pong mechanism, using a phosphorylated active-site intermediate. The polypeptide is Nucleoside diphosphate kinase (Chlamydia muridarum (strain MoPn / Nigg)).